A 1479-amino-acid chain; its full sequence is Type VII secretion system protein EssC (1479 aa).

Topologically, residues 1-229 (MHKLIIKYNK…RPPQPIQKNN (229 aa)) are cytoplasmic. Residues 230–252 (TVIWRSIIPPLVMIALTVVIFLV) traverse the membrane as a helical segment. At 253–256 (RPIG) the chain is on the extracellular side. The chain crosses the membrane as a helical span at residues 257–279 (IYILMMIGMSTVTIVFGITTYFS). Over 280 to 1479 (EKKKYNKDVE…QAYQKIRWFK (1200 aa)) the chain is Cytoplasmic. FtsK domains follow at residues 652–846 (DDIL…QDSN) and 997–1183 (QGPM…SEVS). ATP contacts are provided by residues 672–679 (GTTGSGKS) and 1014–1021 (GSPGYGRT).

The protein belongs to the EssC family. Homooligomer. Interacts with EsaE.

The protein localises to the cell membrane. Functionally, component of the type VII secretion system (Ess). Required for the secretion of substrates including EsxA and EsxB. However, unable to support secretion of the substrate protein EsxC. The protein is Type VII secretion system protein EssC of Staphylococcus aureus (strain Mu50 / ATCC 700699).